Here is a 35-residue protein sequence, read N- to C-terminus: Photosystem II reaction center protein T (35 aa).

A helical transmembrane segment spans residues 3-23 (ALVYTFLLVSTLGIIFFAIFF).

It belongs to the PsbT family. In terms of assembly, PSII is composed of 1 copy each of membrane proteins PsbA, PsbB, PsbC, PsbD, PsbE, PsbF, PsbH, PsbI, PsbJ, PsbK, PsbL, PsbM, PsbT, PsbY, PsbZ, Psb30/Ycf12, at least 3 peripheral proteins of the oxygen-evolving complex and a large number of cofactors. It forms dimeric complexes.

It is found in the plastid. It localises to the chloroplast thylakoid membrane. Its function is as follows. Found at the monomer-monomer interface of the photosystem II (PS II) dimer, plays a role in assembly and dimerization of PSII. PSII is a light-driven water plastoquinone oxidoreductase, using light energy to abstract electrons from H(2)O, generating a proton gradient subsequently used for ATP formation. This is Photosystem II reaction center protein T from Stangeria eriopus (Natal grass cycad).